A 57-amino-acid chain; its full sequence is Large ribosomal subunit protein bL32A (57 aa).

It belongs to the bacterial ribosomal protein bL32 family.

The chain is Large ribosomal subunit protein bL32A (rpmF1) from Streptomyces coelicolor (strain ATCC BAA-471 / A3(2) / M145).